A 102-amino-acid chain; its full sequence is Protein RnfH (102 aa).

The protein belongs to the UPF0125 (RnfH) family.

The sequence is that of Protein RnfH from Haemophilus influenzae (strain PittEE).